Reading from the N-terminus, the 175-residue chain is Transcription factor E (175 aa).

The HTH TFE/IIEalpha-type domain occupies 8–90 (NDPVIQKYLH…LWTFQYENIP (83 aa)).

It belongs to the TFE family. Monomer. Interaction with RNA polymerase subunits RpoF and RpoE is necessary for Tfe stimulatory transcription activity. Able to interact with Tbp and RNA polymerase in the absence of DNA promoter. Interacts both with the preinitiation and elongation complexes.

Functionally, transcription factor that plays a role in the activation of archaeal genes transcribed by RNA polymerase. Facilitates transcription initiation by enhancing TATA-box recognition by TATA-box-binding protein (Tbp), and transcription factor B (Tfb) and RNA polymerase recruitment. Not absolutely required for transcription in vitro, but particularly important in cases where Tbp or Tfb function is not optimal. It dynamically alters the nucleic acid-binding properties of RNA polymerases by stabilizing the initiation complex and destabilizing elongation complexes. Seems to translocate with the RNA polymerase following initiation and acts by binding to the non template strand of the transcription bubble in elongation complexes. The chain is Transcription factor E from Natronomonas pharaonis (strain ATCC 35678 / DSM 2160 / CIP 103997 / JCM 8858 / NBRC 14720 / NCIMB 2260 / Gabara) (Halobacterium pharaonis).